We begin with the raw amino-acid sequence, 215 residues long: N-(5'-phosphoribosyl)anthranilate isomerase (215 aa).

This sequence belongs to the TrpF family.

It carries out the reaction N-(5-phospho-beta-D-ribosyl)anthranilate = 1-(2-carboxyphenylamino)-1-deoxy-D-ribulose 5-phosphate. Its pathway is amino-acid biosynthesis; L-tryptophan biosynthesis; L-tryptophan from chorismate: step 3/5. The protein is N-(5'-phosphoribosyl)anthranilate isomerase of Cellvibrio japonicus (strain Ueda107) (Pseudomonas fluorescens subsp. cellulosa).